We begin with the raw amino-acid sequence, 1648 residues long: Vitellogenin-6 (1648 aa).

A signal peptide spans 1-15 (MRFAVLLALFGLALA). The region spanning 26-691 (YRSGREYRYQ…SNDSVLPKEI (666 aa)) is the Vitellogenin domain. 2 disulfide bridges follow: Cys178–Cys203 and Cys219–Cys222. Asn237, Asn371, and Asn683 each carry an N-linked (GlcNAc...) asparagine glycan. The segment at 1070 to 1092 (EKNVEYEQEDKEPKSSQLQSQIR) is disordered. Residue Asn1295 is glycosylated (N-linked (GlcNAc...) asparagine). The VWFD domain maps to 1346–1514 (PECIVKSKEI…SYLSKDDECE (169 aa)). 2 disulfide bridges follow: Cys1348–Cys1477 and Cys1370–Cys1513. N-linked (GlcNAc...) asparagine glycosylation is found at Asn1584 and Asn1617.

In terms of processing, the precursor protein is probably further processed into vitellin polypeptides VT2 and VT3. Post-translationally, both VT2 and VT3 polypeptides seem to be N-glycosylated.

Its subcellular location is the secreted. Its function is as follows. Precursor of the egg-yolk proteins that are sources of nutrients during embryonic development. The chain is Vitellogenin-6 (vit-6) from Oscheius tipulae.